Consider the following 84-residue polypeptide: Toxin CsE9 (84 aa).

Positions 1-19 (MNSLLMITTCLILIGTVLA) are cleaved as a signal peptide. Positions 20–83 (EDGYLFDKRK…ISRTPGKTCK (64 aa)) constitute an LCN-type CS-alpha/beta domain. Disulfide bonds link cysteine 31–cysteine 82, cysteine 35–cysteine 58, cysteine 44–cysteine 63, and cysteine 48–cysteine 65.

Belongs to the long (4 C-C) scorpion toxin superfamily. Sodium channel inhibitor family. Beta subfamily. In terms of tissue distribution, expressed by the venom gland.

The protein resides in the secreted. In terms of biological role, beta toxins bind voltage-independently at site-4 of sodium channels (Nav) and shift the voltage of activation toward more negative potentials thereby affecting sodium channel activation and promoting spontaneous and repetitive firing. In Centruroides sculpturatus (Arizona bark scorpion), this protein is Toxin CsE9.